Consider the following 280-residue polypeptide: Large ribosomal subunit protein uL2 (280 aa).

Positions 213-280 are disordered; the sequence is RWKGKRPSVR…RRRTGKKHAR (68 aa). The span at 268–280 shows a compositional bias: basic residues; it reads IVRRRRTGKKHAR.

Belongs to the universal ribosomal protein uL2 family. Part of the 50S ribosomal subunit. Forms a bridge to the 30S subunit in the 70S ribosome.

Its function is as follows. One of the primary rRNA binding proteins. Required for association of the 30S and 50S subunits to form the 70S ribosome, for tRNA binding and peptide bond formation. It has been suggested to have peptidyltransferase activity; this is somewhat controversial. Makes several contacts with the 16S rRNA in the 70S ribosome. This Mycobacterium leprae (strain Br4923) protein is Large ribosomal subunit protein uL2.